The primary structure comprises 861 residues: MKYQLFLSLALCVGLGASAQTLPYQNPNLSAKERAVDLCSRLTLEEKAMLMLDESPAIPRLGIKKFFWWSEALHGAANMGNVTNFPEPVGMAASFNPHLLFKVFDIASTEFRAQYNHRMYDLNGEDMKMRSLSVWTPNVNIFRDPRWGRGQETYGEDPYLTSVMGVQVVKGLQGPEDARYRKLWACAKHYAVHSGPEYTRHTANLTDVSARDFWETYMPAFKTLVKDAKVREVMCAYQRLDDDPCCGSTRLLQQILRDEWGFEYLVVSDCGAVSDFYENHKSSSDAVHGTSKAVLAGTDVECGFNYAYKSLPEAVRKGLLSEKEVDKHVIRLLEGRFDLGEMDDPSLVEWSKIPYSAMSTKASANVALDMARQTIVLLQNKNNILPLKKNAEKIAIIGPNAHNEPMMWGNYNGTPNHTVTILDGVKAKQKKLVYIPGCDLTNDKVMECHLATDCVTPDGKKGLKGTFWNNTEMAGKPFTTEYYTKPVNVTTAGMHVFAPNLPIEDFSAKYETTFTAKEAGEYVVNVESTGHFELYVNGKQQFVNHIWRATPTRTVLKAEKGQKFDIEVRFQTVKTWGASMKIDVARELNIDYQETIAQLKGINKVIFCGGIAPSLEGEEMPVNIEGFKGGDRTSIELPKVQREFLKALKAAGKQVIYVNCSGSAIALQPETESCDAIVQAWYPGQEGGTAVADVLFGDYNPGGKLSVTFYKNDQQLPDYEDYSMKGRTYRYFDDALFPFGYGLSYTTFEVGEAKVEAATDGALYNVQIPVTNTGTKNGSETIQLYIRNLQDPDGPLKSLRGFERLDIKAGKTATANLKLTKESLEFWDAETNTMRTKPGKYEILYGTSSLDKDLKKLTITL.

A signal peptide spans 1 to 19; sequence MKYQLFLSLALCVGLGASA. Asp269 acts as the Nucleophile in catalysis. A PA14 domain is found at 458-600; the sequence is DGKKGLKGTF…DYQETIAQLK (143 aa). Residue Glu616 is the Proton donor/acceptor of the active site.

It belongs to the glycosyl hydrolase 3 family. In terms of assembly, exists as a large polymeric species, presumably as a homononamer.

The enzyme catalyses Hydrolysis of (1-&gt;4)-beta-D-xylans, to remove successive D-xylose residues from the non-reducing termini.. It carries out the reaction Hydrolysis of terminal non-reducing alpha-L-arabinofuranoside residues in alpha-L-arabinosides.. It participates in glycan degradation; xylan degradation. Its function is as follows. Involved in degradation of plant cell wall polysaccharides. Has beta-xylosidase activity via its capacity to hydrolyze glycosidic linkages of beta-1,4-xylo-oligosaccharides of various lengths (X2 to X6), releasing xylose monomers. To a much lesser extent, also has alpha-L-arabinofuranosidase activity. Does not possess beta-D-glucosidase activity. Acts synergistically with Xyn10D-Fae1A to increase the release of xylose from xylan. In Xylanibacter ruminicola (strain ATCC 19189 / DSM 19721 / CIP 105475 / JCM 8958 / 23) (Prevotella ruminicola), this protein is Xylan 1,4-beta-xylosidase.